Consider the following 219-residue polypeptide: Mucosal pentraxin (219 aa).

The first 19 residues, methionine 1–serine 19, serve as a signal peptide directing secretion. Residues aspartate 24–threonine 219 form the Pentraxin (PTX) domain. Cysteine 55 and cysteine 114 form a disulfide bridge. 6 residues coordinate Ca(2+): aspartate 77, asparagine 78, glutamate 155, glutamine 156, aspartate 157, and glutamine 167.

This sequence belongs to the pentraxin family. As to quaternary structure, homopentamer. Pentraxin (or pentaxin) have a discoid arrangement of 5 non-covalently bound subunits. Requires Ca(2+) as cofactor. As to expression, expression is restricted to small intestine, stomach and colon. Within colon, expressed in epithelial cells located within the lower to mid region of transverse and distal crypts, but not in proximal colon.

The protein localises to the secreted. The sequence is that of Mucosal pentraxin (Mptx1) from Rattus norvegicus (Rat).